The primary structure comprises 137 residues: Nucleoside diphosphate kinase (137 aa).

ATP is bound by residues Lys-9, Phe-57, Arg-85, Thr-91, Arg-102, and Asn-112. His-115 acts as the Pros-phosphohistidine intermediate in catalysis.

Belongs to the NDK family. Homotetramer. Mg(2+) serves as cofactor.

Its subcellular location is the cytoplasm. It carries out the reaction a 2'-deoxyribonucleoside 5'-diphosphate + ATP = a 2'-deoxyribonucleoside 5'-triphosphate + ADP. The enzyme catalyses a ribonucleoside 5'-diphosphate + ATP = a ribonucleoside 5'-triphosphate + ADP. Its function is as follows. Major role in the synthesis of nucleoside triphosphates other than ATP. The ATP gamma phosphate is transferred to the NDP beta phosphate via a ping-pong mechanism, using a phosphorylated active-site intermediate. This Wolinella succinogenes (strain ATCC 29543 / DSM 1740 / CCUG 13145 / JCM 31913 / LMG 7466 / NCTC 11488 / FDC 602W) (Vibrio succinogenes) protein is Nucleoside diphosphate kinase.